The primary structure comprises 411 residues: Protein phosphatase 1 regulatory subunit 36 (411 aa).

In terms of assembly, interacts with PPP1CA.

Functionally, inhibits phosphatase activity of protein phosphatase 1 (PP1) complexes. This chain is Protein phosphatase 1 regulatory subunit 36 (Ppp1r36), found in Rattus norvegicus (Rat).